A 362-amino-acid chain; its full sequence is Sulfate/thiosulfate import ATP-binding protein CysA (362 aa).

The 235-residue stretch at 3 to 237 (IEIHDLSKQF…PANPFVYEFL (235 aa)) folds into the ABC transporter domain. 35-42 (GPSGSGKT) is a binding site for ATP.

The protein belongs to the ABC transporter superfamily. Sulfate/tungstate importer (TC 3.A.1.6) family. The complex is composed of two ATP-binding proteins (CysA), two transmembrane proteins (CysT and CysW) and a solute-binding protein (CysP).

The protein localises to the cell inner membrane. It catalyses the reaction sulfate(out) + ATP + H2O = sulfate(in) + ADP + phosphate + H(+). The enzyme catalyses thiosulfate(out) + ATP + H2O = thiosulfate(in) + ADP + phosphate + H(+). In terms of biological role, part of the ABC transporter complex CysAWTP involved in sulfate/thiosulfate import. Responsible for energy coupling to the transport system. In Nitrosomonas europaea (strain ATCC 19718 / CIP 103999 / KCTC 2705 / NBRC 14298), this protein is Sulfate/thiosulfate import ATP-binding protein CysA.